Reading from the N-terminus, the 152-residue chain is Putative membrane protein insertion efficiency factor (152 aa).

Residues 81 to 152 form a disordered region; the sequence is AAGGYDPVPG…IVGSGRGPWV (72 aa).

It belongs to the UPF0161 family.

Its subcellular location is the cell membrane. In terms of biological role, could be involved in insertion of integral membrane proteins into the membrane. This is Putative membrane protein insertion efficiency factor from Frankia casuarinae (strain DSM 45818 / CECT 9043 / HFP020203 / CcI3).